The primary structure comprises 163 residues: Putative pre-16S rRNA nuclease (163 aa).

Belongs to the YqgF nuclease family.

The protein resides in the cytoplasm. Functionally, could be a nuclease involved in processing of the 5'-end of pre-16S rRNA. The chain is Putative pre-16S rRNA nuclease from Zymomonas mobilis subsp. mobilis (strain ATCC 31821 / ZM4 / CP4).